The primary structure comprises 183 residues: ATP synthase subunit delta (183 aa).

The protein belongs to the ATPase delta chain family. F-type ATPases have 2 components, F(1) - the catalytic core - and F(0) - the membrane proton channel. F(1) has five subunits: alpha(3), beta(3), gamma(1), delta(1), epsilon(1). F(0) has three main subunits: a(1), b(2) and c(10-14). The alpha and beta chains form an alternating ring which encloses part of the gamma chain. F(1) is attached to F(0) by a central stalk formed by the gamma and epsilon chains, while a peripheral stalk is formed by the delta and b chains.

Its subcellular location is the cell inner membrane. Functionally, f(1)F(0) ATP synthase produces ATP from ADP in the presence of a proton or sodium gradient. F-type ATPases consist of two structural domains, F(1) containing the extramembraneous catalytic core and F(0) containing the membrane proton channel, linked together by a central stalk and a peripheral stalk. During catalysis, ATP synthesis in the catalytic domain of F(1) is coupled via a rotary mechanism of the central stalk subunits to proton translocation. Its function is as follows. This protein is part of the stalk that links CF(0) to CF(1). It either transmits conformational changes from CF(0) to CF(1) or is implicated in proton conduction. This chain is ATP synthase subunit delta, found in Desulfovibrio desulfuricans (strain ATCC 27774 / DSM 6949 / MB).